A 518-amino-acid chain; its full sequence is Voltage-gated potassium channel regulatory subunit KCNG2 (518 aa).

Residues 1-214 (MALLTGNADR…DMVENPHSGI (214 aa)) are Cytoplasmic-facing. Residues 215–236 (PGKIFACISISFVAITAVSLCI) traverse the membrane as a helical segment. Residues 237-257 (STMPDVREEEDRGECSQKCYD) lie on the Extracellular side of the membrane. A helical transmembrane segment spans residues 258–279 (IFVLETVCVAWFSFEFLLRSIQ). Topologically, residues 280 to 290 (AENKCAFLKTP) are cytoplasmic. A helical membrane pass occupies residues 291–311 (LNIIDILAILPFYISLIVDMA). The Extracellular portion of the chain corresponds to 312–331 (STKNSSKPGGGAGNKYLERV). A helical; Voltage-sensor membrane pass occupies residues 332 to 352 (GLVLRFLRALRILYVMRLARH). Residues 353 to 367 (SLGLQTLGLTVRRCT) are Cytoplasmic-facing. A helical membrane pass occupies residues 368 to 389 (REFGLLLLFLCVAMALFSPLVY). At 390 to 404 (LAESELGAKQEFTSI) the chain is on the extracellular side. The helical intramembrane region spans 405 to 416 (PTSYWWAVISMT). Positions 417–422 (TVGYGD) match the Selectivity filter motif. An intramembrane segment occupies 417 to 424 (TVGYGDMV). The Extracellular portion of the chain corresponds to 425-431 (PRSIPGQ). A helical membrane pass occupies residues 432–460 (VVALSSILSGILLMAFPVTSIFHTFSRSY). The Cytoplasmic portion of the chain corresponds to 461–518 (SELKEQQQRAASRQMHQLEESTKLAGGGSSQWITAASPPDAAREDGRPELDQEAKRSC). A disordered region spans residues 473 to 518 (RQMHQLEESTKLAGGGSSQWITAASPPDAAREDGRPELDQEAKRSC). Residues 501–518 (AAREDGRPELDQEAKRSC) are compositionally biased toward basic and acidic residues.

Belongs to the potassium channel family. G (TC 1.A.1.2) subfamily. Kv6.2/KCNG2 sub-subfamily. Heterodimer with KCNB1.

It localises to the cell membrane. Regulatory alpha-subunit of the voltage-gated potassium (Kv) channel which, when coassembled with KCNB1, can modulate the kinetics and conductance-voltage relationship. Modulates channel activity by shifting the threshold and the half-maximal activation to more negative values. Potassium channel subunit that does not form functional channels by itself. This Gallus gallus (Chicken) protein is Voltage-gated potassium channel regulatory subunit KCNG2.